The primary structure comprises 310 residues: Thioredoxin reductase (310 aa).

34–41 is an FAD binding site; sequence NGMQPGGQ. Cysteines 135 and 138 form a disulfide. Residue 281 to 290 participates in FAD binding; sequence DVQDKIYRQA.

This sequence belongs to the class-II pyridine nucleotide-disulfide oxidoreductase family. In terms of assembly, homodimer. FAD is required as a cofactor.

The protein localises to the cytoplasm. It catalyses the reaction [thioredoxin]-dithiol + NADP(+) = [thioredoxin]-disulfide + NADPH + H(+). The protein is Thioredoxin reductase (trxB) of Rickettsia felis (strain ATCC VR-1525 / URRWXCal2) (Rickettsia azadi).